Here is a 224-residue protein sequence, read N- to C-terminus: Putative adhesin RF_1314 (224 aa).

Positions 1-22 are cleaved as a signal peptide; it reads MKKLLLIAATSATILSSSISFA.

The chain is Putative adhesin RF_1314 from Rickettsia felis (strain ATCC VR-1525 / URRWXCal2) (Rickettsia azadi).